The primary structure comprises 817 residues: Disks large homolog 3 (817 aa).

N-acetylmethionine occurs at positions 1 and 2. Positions 33-101 (WQVPDPYGPG…GKSTPKLNGS (69 aa)) are disordered. Over residues 40–53 (GPGGGNGASAGYGG) the composition is skewed to gly residues. The segment covering 57-69 (QTLPSQAGATPTP) has biased composition (polar residues). 3 consecutive PDZ domains span residues 130–217 (EEIV…VRRR), 226–311 (EVNL…KVAK), and 379–465 (DFTR…VAQY). S139 bears the Phosphoserine mark. The SH3 domain maps to 501–571 (KRSLYVRALF…PSKKRVEKKE (71 aa)). A Guanylate kinase-like domain is found at 627-802 (ARPVIILGPM…IYNKIKQIIE (176 aa)). The residue at position 673 (Y673) is a Phosphotyrosine.

Belongs to the MAGUK family. As to quaternary structure, interacts through its PDZ domains with NETO1, GRIN2B and SYNGAP1. Interacts through its guanylate kinase-like domain with DLGAP1, DLGAP2, DLGAP3 and DLGAP4. Interacts with FLTP/C1orf192. Interacts through its PDZ domains with APC. Interacts through its first two PDZ domains with ERBB4. Interacts through its third PDZ domain with NLGN1, and probably with NLGN2 and NLGN3. Interacts with FRMPD4 (via C-terminus). Interacts with LRFN1, LRFN2 and LRFN4. Interacts with DGKI (via PDZ-binding motif).

In terms of biological role, required for learning most likely through its role in synaptic plasticity following NMDA receptor signaling. In Homo sapiens (Human), this protein is Disks large homolog 3 (DLG3).